A 764-amino-acid polypeptide reads, in one-letter code: MVVKTYPLGMVGTNNGIAENEGDSGLEPYVGLEFDTAEEARDYYNSYATRTGFKVRTGQLYRSRTDGTVSSRRFVCSKEGFQLNSRTGCPAFIRVQRRDTGKWVLDQIQKEHNHDLGGHIEEAQTTPRPSVQQRAPAPTKLGISVPHRPKMKVVDEADKGRSCPSGVISFKRFKGAEDSDGQTQPKATEPYAGLEFNSANEACQFYQAYAEVVGFRVRIGQLFRSKVDGSITSRRFVCSKEGFQHPSRMGCGAYMRIKRQDSGGWIVDRLNKDHNHDLEPGKKNAGMKKITDDVTGGLDSVDLIELNDLSNHISSTRENTIGKEWYPVLLDYFQSKQAEDMGFFYAIELDSNGSCMSIFWADSRSRFACSQFGDAVVFDTSYRKGDYSVPFATFIGFNHHRQPVLLGGALVADESKEAFSWLFQTWLRAMSGRRPRSMVADQDLPIQQAVAQVFPGTHHRFSAWQIRSKERENLRSFPNEFKYEYEKCLYQSQTTVEFDTMWSSLVNKYGLRDNMWLREIYEKREKWVPAYLRASFFGGIHVDGTFDPFYGTSLNSLTSLREFISRYEQGLEQRREEERKEDFNSYNLQPFLQTKEPVEEQCRRLYTLTIFRIFQSELAQSYNYLGLKTYEEGAISRFLVRKCGNENEKHAVTFSASNLNASCSCQMFEYEGLLCRHILKVFNLLDIRELPSRYILHRWTKNAEFGFVRDVESGVTSQDLKALMIWSLREAASKYIEFGTSSLEKYKLAYEIMREGGKKLCWQR.

In terms of domain architecture, FAR1 1 spans Asp42–Gly118. The disordered stretch occupies residues His119–Ser144. Over residues Ala123 to Gln133 the composition is skewed to polar residues. In terms of domain architecture, FAR1 2 spans Gln204–Pro280. The MULE domain maps to Ala375 to Arg471. The SWIM-type zinc finger occupies His650–Asp686.

The protein belongs to the FHY3/FAR1 family. As to expression, expressed in hypocotyls, rosette and cauline leaves, inflorescences stems, flowers and siliques.

It is found in the nucleus. Putative transcription activator involved in regulating light control of development. The protein is Protein FAR1-RELATED SEQUENCE 7 (FRS7) of Arabidopsis thaliana (Mouse-ear cress).